The sequence spans 694 residues: Polyribonucleotide nucleotidyltransferase (694 aa).

Positions 485 and 491 each coordinate Mg(2+). The region spanning 552 to 611 (PRIETMQIKPNKIATVIGPGGKQIRQIIEEAGVQIDINDSGLVSISASSPQAIEKAKSII) is the KH domain. The S1 motif domain maps to 621-689 (GKIYEGRVTS…EKGQYKLSHK (69 aa)).

Belongs to the polyribonucleotide nucleotidyltransferase family. Mg(2+) serves as cofactor.

It is found in the cytoplasm. The enzyme catalyses RNA(n+1) + phosphate = RNA(n) + a ribonucleoside 5'-diphosphate. Its function is as follows. Involved in mRNA degradation. Catalyzes the phosphorolysis of single-stranded polyribonucleotides processively in the 3'- to 5'-direction. This Chlamydia abortus (strain DSM 27085 / S26/3) (Chlamydophila abortus) protein is Polyribonucleotide nucleotidyltransferase.